Here is a 206-residue protein sequence, read N- to C-terminus: Orotate phosphoribosyltransferase (206 aa).

Residues K26, 72–73 (YK), R99, K100, K103, H105, and 124–132 (DDVMTSGFS) contribute to the 5-phospho-alpha-D-ribose 1-diphosphate site. Residues T128 and R157 each contribute to the orotate site.

Belongs to the purine/pyrimidine phosphoribosyltransferase family. PyrE subfamily. As to quaternary structure, homodimer. The cofactor is Mg(2+).

The enzyme catalyses orotidine 5'-phosphate + diphosphate = orotate + 5-phospho-alpha-D-ribose 1-diphosphate. The protein operates within pyrimidine metabolism; UMP biosynthesis via de novo pathway; UMP from orotate: step 1/2. Functionally, catalyzes the transfer of a ribosyl phosphate group from 5-phosphoribose 1-diphosphate to orotate, leading to the formation of orotidine monophosphate (OMP). This Buchnera aphidicola subsp. Baizongia pistaciae (strain Bp) protein is Orotate phosphoribosyltransferase.